A 511-amino-acid polypeptide reads, in one-letter code: ATP synthase subunit alpha 1 (511 aa).

174–181 (GDRQTGKT) contacts ATP.

This sequence belongs to the ATPase alpha/beta chains family. In terms of assembly, F-type ATPases have 2 components, CF(1) - the catalytic core - and CF(0) - the membrane proton channel. CF(1) has five subunits: alpha(3), beta(3), gamma(1), delta(1), epsilon(1). CF(0) has four main subunits: a(1), b(1), b'(1) and c(9-12).

It is found in the cell inner membrane. The enzyme catalyses ATP + H2O + 4 H(+)(in) = ADP + phosphate + 5 H(+)(out). Its function is as follows. Produces ATP from ADP in the presence of a proton gradient across the membrane. The alpha chain is a regulatory subunit. The chain is ATP synthase subunit alpha 1 from Chlorobium luteolum (strain DSM 273 / BCRC 81028 / 2530) (Pelodictyon luteolum).